The primary structure comprises 441 residues: Chitinase-like protein Idgf3 (441 aa).

Positions 1 to 23 are cleaved as a signal peptide; it reads MTGSLWLSLALSLAVLAQFKVSA. A GH18 domain is found at 25-441; that stretch reads PNLVCFYDSQ…MLRAIKYRLL (417 aa). Cysteines 29 and 56 form a disulfide. N-linked (GlcNAc...) asparagine glycosylation is present at Asn221. Residues 309-331 form a disordered region; sequence SGDSGMPVVPSTQGPAPAGPQSK. A disulfide bond links Cys342 and Cys425.

It belongs to the glycosyl hydrolase 18 family. IDGF subfamily. In terms of processing, glycosylated.

It is found in the secreted. In terms of biological role, cooperates with insulin-like peptides to stimulate the proliferation, polarization and motility of imaginal disk cells. May act by stabilizing the binding of insulin-like peptides to its receptor through a simultaneous interaction with both molecules to form a multiprotein signaling complex. The polypeptide is Chitinase-like protein Idgf3 (Idgf3) (Drosophila yakuba (Fruit fly)).